The primary structure comprises 255 residues: Coenzyme F420:L-glutamate ligase (255 aa).

Residues 11 to 14 (IPLI), 40 to 41 (ST), and Lys45 each bind GTP. Position 109 (Asp109) interacts with a divalent metal cation. Asn112 contacts GTP. Positions 150, 151, and 208 each coordinate a divalent metal cation. Residue 206–213 (MGEGAGGT) participates in GTP binding.

It belongs to the CofE family. In terms of assembly, homodimer. Requires Mg(2+) as cofactor. The cofactor is Mn(2+). K(+) is required as a cofactor.

The enzyme catalyses oxidized coenzyme F420-0 + GTP + L-glutamate = oxidized coenzyme F420-1 + GDP + phosphate + H(+). It catalyses the reaction oxidized coenzyme F420-1 + GTP + L-glutamate = oxidized coenzyme F420-2 + GDP + phosphate + H(+). Its pathway is cofactor biosynthesis; coenzyme F420 biosynthesis. Catalyzes the GTP-dependent successive addition of two or more gamma-linked L-glutamates to the L-lactyl phosphodiester of 7,8-didemethyl-8-hydroxy-5-deazariboflavin (F420-0) to form coenzyme F420-0-glutamyl-glutamate (F420-2) or polyglutamated F420 derivatives. The polypeptide is Coenzyme F420:L-glutamate ligase (Methanosarcina barkeri (strain Fusaro / DSM 804)).